A 229-amino-acid polypeptide reads, in one-letter code: Ribonuclease HII (229 aa).

An RNase H type-2 domain is found at 34–223 (WPVAGADEAG…LRKVEDGPQM (190 aa)). A divalent metal cation is bound by residues Asp-40, Glu-41, and Asp-131.

The protein belongs to the RNase HII family. The cofactor is Mn(2+). Mg(2+) serves as cofactor.

Its subcellular location is the cytoplasm. It carries out the reaction Endonucleolytic cleavage to 5'-phosphomonoester.. Endonuclease that specifically degrades the RNA of RNA-DNA hybrids. This is Ribonuclease HII from Rhizobium leguminosarum bv. trifolii (strain WSM2304).